Here is a 356-residue protein sequence, read N- to C-terminus: tRNA pseudouridine synthase D (356 aa).

Asp84 serves as the catalytic Nucleophile. In terms of domain architecture, TRUD spans 159-302 (GVPNYYGPQR…RRGARRPIRV (144 aa)).

This sequence belongs to the pseudouridine synthase TruD family.

The catalysed reaction is uridine(13) in tRNA = pseudouridine(13) in tRNA. Responsible for synthesis of pseudouridine from uracil-13 in transfer RNAs. This chain is tRNA pseudouridine synthase D, found in Thermus thermophilus (strain ATCC 27634 / DSM 579 / HB8).